The following is a 1048-amino-acid chain: Histone deacetylase complex subunit SAP130 (1048 aa).

Residues 1–95 are disordered; the sequence is MGPPRHPQAG…LQSREEKQEP (95 aa). Positions 40 to 54 are enriched in polar residues; the sequence is TGLSQAPSQIANSGS. A compositionally biased stretch (basic and acidic residues) spans 67-80; sequence ESGRDSEVSAREHM. Residue Arg232 is modified to Omega-N-methylarginine. Residue Thr355 is modified to Phosphothreonine. Ser442 and Ser465 each carry phosphoserine. 3 disordered regions span residues 458-477, 576-617, and 649-687; these read PISG…RSDN, IGTP…PEGK, and QTHS…SEIH. Polar residues-rich tracts occupy residues 590–613 and 649–667; these read GIHS…QQPQ and QTHS…SSPR. Lys785 participates in a covalent cross-link: Glycyl lysine isopeptide (Lys-Gly) (interchain with G-Cter in SUMO2). Residues 819–871 are disordered; the sequence is LSMPTSDLPPGASPRKKPRKQQHVISTEEGDMMETNSTDDEKSTAKSLLVKAE. The segment at 836-1047 is interactions with SIN3A and HDAC1; sequence PRKQQHVIST…KVSKLKRKEK (212 aa). Residue Ser855 is modified to Phosphoserine. Thr856 is subject to Phosphothreonine. Residues Lys864 and Lys869 each participate in a glycyl lysine isopeptide (Lys-Gly) (interchain with G-Cter in SUMO2) cross-link. Phosphoserine is present on Ser875.

Belongs to the SAP130 family. As to quaternary structure, component of a mSin3A corepressor complex that contains SIN3A, SAP130, SUDS3/SAP45, ARID4B/SAP180, HDAC1 and HDAC2. Interacts (released by dead or dying cells) with CLEC4E. Post-translationally, acetylated. In terms of processing, sumoylated with SUMO1. In terms of tissue distribution, expressed in various cancer cell ines.

It localises to the nucleus. Its function is as follows. Acts as a transcriptional repressor. May function in the assembly and/or enzymatic activity of the mSin3A corepressor complex or in mediating interactions between the complex and other regulatory complexes. In Homo sapiens (Human), this protein is Histone deacetylase complex subunit SAP130 (SAP130).